The sequence spans 454 residues: NEDD8-activating enzyme E1 catalytic subunit (454 aa).

At alanine 2 the chain carries N-acetylalanine. 56–80 (GLGCELLKDLALSGFRNLEVIDMDR) contributes to the ATP binding site. Cysteine 215 serves as the catalytic Glycyl thioester intermediate.

It belongs to the ubiquitin-activating E1 family. UBA3 subfamily. In terms of assembly, heterodimer of UBA3/ECR1 and AXR1. Interacts with NEDD8 and RCE1. In terms of tissue distribution, expressed in shoot, root and floral meristems, in vascular tissues of cotyledons and mature leaves, and in the stele of the root.

The protein resides in the nucleus. The catalysed reaction is ATP + [NEDD8 protein] + [E1 NEDD8-activating enzyme]-L-cysteine = AMP + diphosphate + [E1 NEDD8-activating enzyme]-S-[NEDD8 protein]-yl-L-cysteine.. It participates in protein modification; protein neddylation. Functionally, catalytic subunit of the dimeric ECR1-AXR1 E1 enzyme. E1 activates NEDD8/RUB1 by first adenylating its C-terminal glycine residue with ATP, thereafter linking this residue to the side chain of the catalytic cysteine, yielding a NEDD8-ECR1 thioester and free AMP. E1 finally transfers NEDD8 to the catalytic cysteine of RCE1. This is NEDD8-activating enzyme E1 catalytic subunit (ECR1) from Arabidopsis thaliana (Mouse-ear cress).